Here is a 287-residue protein sequence, read N- to C-terminus: Mitochondrial glycine transporter B (287 aa).

Solcar repeat units follow at residues 7 to 97 (HPAL…LKQH), 104 to 188 (PSAG…AKKA), and 198 to 282 (IAPL…LMAR). The next 6 membrane-spanning stretches (helical) occupy residues 13–38 (FMCG…TRLQ), 72–98 (GVSP…KQHY), 110–135 (VLLG…TRFE), 163–186 (GLTA…SQAK), 202–228 (VNFG…KTHM), and 257–275 (GAVP…AWTV).

Belongs to the mitochondrial carrier (TC 2.A.29) family. SLC25A38 subfamily. As to expression, at 24 hours post-fertilization, expressed predominantly in posterior blood island, posterior cardinal vein and circulating blood. At 34 hours post-fertilization, becomes restricted to posterior blood island and circulating blood.

The protein resides in the mitochondrion inner membrane. The enzyme catalyses glycine(in) = glycine(out). Mitochondrial glycine transporter that imports glycine into the mitochondrial matrix. Plays an important role in providing glycine for the first enzymatic step in heme biosynthesis, the condensation of glycine with succinyl-CoA to produce 5-aminolevulinate (ALA) in the mitochondrial matrix. Required during erythropoiesis. In terms of biological role, may play a role as pro-apoptotic protein that induces caspase-dependent apoptosis. The protein is Mitochondrial glycine transporter B (slc25a38b) of Danio rerio (Zebrafish).